The following is a 255-amino-acid chain: Pimeloyl-[acyl-carrier protein] methyl ester esterase (255 aa).

Positions 16 to 241 constitute an AB hydrolase-1 domain; the sequence is LVLVHGWGMN…QSSHAPFMTE (226 aa). Substrate-binding positions include W22, 82 to 83, and 143 to 147; these read SL and FMALQ. S82 acts as the Nucleophile in catalysis. Active-site residues include D207 and H235. H235 serves as a coordination point for substrate.

It belongs to the AB hydrolase superfamily. Carboxylesterase BioH family. In terms of assembly, monomer.

The protein resides in the cytoplasm. The catalysed reaction is 6-carboxyhexanoyl-[ACP] methyl ester + H2O = 6-carboxyhexanoyl-[ACP] + methanol + H(+). Its pathway is cofactor biosynthesis; biotin biosynthesis. The physiological role of BioH is to remove the methyl group introduced by BioC when the pimeloyl moiety is complete. It allows to synthesize pimeloyl-ACP via the fatty acid synthetic pathway through the hydrolysis of the ester bonds of pimeloyl-ACP esters. The polypeptide is Pimeloyl-[acyl-carrier protein] methyl ester esterase (Vibrio cholerae serotype O1 (strain ATCC 39315 / El Tor Inaba N16961)).